Consider the following 907-residue polypeptide: Glutamate receptor 1 (907 aa).

Positions Met-1–Gly-18 are cleaved as a signal peptide. The Extracellular segment spans residues Ala-19–Ala-536. Residues Asn-63, Asn-249, Asn-257, Asn-363, Asn-401, and Asn-406 are each glycosylated (N-linked (GlcNAc...) asparagine). Cys-75 and Cys-323 are joined by a disulfide. Residues Pro-492, Thr-494, and Arg-499 each coordinate L-glutamate. Residues Tyr-537–Val-557 form a helical membrane-spanning segment. Residues Ser-558 to Glu-584 are Cytoplasmic-facing. The segment at residues Phe-585–Gln-600 is an intramembrane region (helical; Pore-forming). An intramembrane segment occupies Gln-601–Cys-603. Residue Cys-603 is the site of S-palmitoyl cysteine attachment. The Cytoplasmic portion of the chain corresponds to Asp-604–Ser-609. Residues Leu-610–Tyr-630 traverse the membrane as a helical segment. Residues Thr-631 to Asn-805 lie on the Extracellular side of the membrane. Residue Ser-645 is modified to Phosphoserine. Residues Ser-668 and Thr-669 each contribute to the L-glutamate site. At Ser-710 the chain carries Phosphoserine; by PKC. Glu-719 contacts L-glutamate. Cys-732 and Cys-787 are disulfide-bonded. A helical membrane pass occupies residues Val-806 to Ile-826. At Glu-827–Leu-907 the chain is on the cytoplasmic side. The S-palmitoyl cysteine moiety is linked to residue Cys-829. Residue Ser-849 is modified to Phosphoserine; by PKC, PKA and CAMK2. The tract at residues Ser-857–Ser-881 is disordered. Ser-863 carries the post-translational modification Phosphoserine; by PKC, PKA and PKG/PRKG2. Positions Gly-866–Glu-875 are enriched in gly residues. Positions Ala-904–Leu-907 match the PDZ-binding motif.

The protein belongs to the glutamate-gated ion channel (TC 1.A.10.1) family. GRIA1 subfamily. In terms of assembly, homotetramer or heterotetramer of pore-forming glutamate receptor subunits; heteromeric assembly can be the result of both receptor subtype and flip-flop forms and according the composition, one partner can be dominant with respect to the fast desensitizing current component, whereas the other can determine the steady-state component. Tetramers may be formed by the dimerization of dimers. Found in a complex with GRIA2, GRIA3, GRIA4, CNIH2, CNIH3, CACNG2, CACNG3, CACNG4, CACNG5, CACNG7 and CACNG8. Interacts with HIP1 and RASGRF2. Interacts with SYNDIG1 and GRIA2. Interacts with DLG1 (via C-terminus). Interacts with LRFN1. Interacts with PRKG2. Interacts with CNIH2 and CACNG2. Interacts with CACNG5; this interaction modulates the gating. Interacts (via C-terminus) with PDLIM4 (via LIM domain); this interaction as well as the interaction of PDLIM4 with alpha-actinin is required for their colocalization in early endosomes. Interacts with SNX27 (via PDZ domain); the interaction is required for recycling to the plasma membrane when endocytosed and prevent degradation in lysosomes. Interacts (via PDZ-binding motif) with SHANK3 (via PDZ domain). Interacts with CACNG3; associates GRIA1 with the adapter protein complex 4 (AP-4) to target GRIA1 to the somatodendritic compartment of neurons. Interacts with CACNG2; this interaction mediates traffick to the plasma membrane and modulation of desensitization. Interaction with CNIH2 and CNIH3; this interaction promotes expression at the plasma membrane and extensively modulates their gating properties by slowing deactivation and desensitization kinetics. Found in a complex with GRIA2, GRIA3, GRIA4, DLG4, CACNG8 and CNIH2. In terms of processing, phosphorylated at Ser-645. Phosphorylated at Ser-710 by PKC. Phosphorylated at Ser-849 by PKC, PKA and CAMK2. Phosphorylated at Ser-863 by PKC, PKA and PRKG2. Phosphorylation of Ser-863 is reduced by induction of long-term depression and increased by induction of long-term potentiation. Post-translationally, palmitoylated. Depalmitoylated by CPT1C and upon L-glutamate stimulation. ZDHHC3/GODZ specifically palmitoylates Cys-603, which leads to Golgi retention and decreased cell surface expression. In contrast, Cys-829 palmitoylation does not affect cell surface expression but regulates stimulation-dependent endocytosis. Detected in cerebellum (at protein level).

It is found in the cell membrane. Its subcellular location is the endoplasmic reticulum membrane. It localises to the postsynaptic cell membrane. The protein resides in the postsynaptic density membrane. The protein localises to the cell projection. It is found in the dendrite. Its subcellular location is the dendritic spine. It localises to the early endosome membrane. The protein resides in the recycling endosome membrane. The protein localises to the presynapse. It is found in the synapse. The catalysed reaction is Ca(2+)(in) = Ca(2+)(out). It catalyses the reaction Na(+)(in) = Na(+)(out). It carries out the reaction Mg(2+)(in) = Mg(2+)(out). The enzyme catalyses Li(+)(in) = Li(+)(out). The catalysed reaction is K(+)(in) = K(+)(out). It catalyses the reaction Sr(2+)(in) = Sr(2+)(out). With respect to regulation, glutamate-gated receptor activity inhibited by DNQX (6,7-dinitroquinoxaline-2,3-dione). Its function is as follows. Ionotropic glutamate receptor that functions as a ligand-gated cation channel, gated by L-glutamate and glutamatergic agonists such as alpha-amino-3-hydroxy-5-methyl-4-isoxazolepropionic acid (AMPA), quisqualic acid, and kainic acid. L-glutamate acts as an excitatory neurotransmitter at many synapses in the central nervous system. Binding of the excitatory neurotransmitter L-glutamate induces a conformation change, leading to the opening of the cation channel, and thereby converts the chemical signal to an electrical impulse upon entry of monovalent and divalent cations such as sodium and calcium. The receptor then desensitizes rapidly and enters in a transient inactive state, characterized by the presence of bound agonist. In the presence of CACNG2 or CACNG4 or CACNG7 or CACNG8, shows resensitization which is characterized by a delayed accumulation of current flux upon continued application of L-glutamate. Resensitization is blocked by CNIH2 through interaction with CACNG8 in the CACNG8-containing AMPA receptors complex. Calcium (Ca(2+)) permeability depends on subunits composition and, heteromeric channels containing edited GRIA2 subunit are calcium-impermeable. Also permeable to other divalents cations such as strontium(2+) and magnesium(2+) and monovalent cations such as potassium(1+) and lithium(1+). The sequence is that of Glutamate receptor 1 from Rattus norvegicus (Rat).